A 291-amino-acid polypeptide reads, in one-letter code: Ribosomal RNA small subunit methyltransferase I (291 aa).

This sequence belongs to the methyltransferase superfamily. RsmI family.

It is found in the cytoplasm. The catalysed reaction is cytidine(1402) in 16S rRNA + S-adenosyl-L-methionine = 2'-O-methylcytidine(1402) in 16S rRNA + S-adenosyl-L-homocysteine + H(+). Catalyzes the 2'-O-methylation of the ribose of cytidine 1402 (C1402) in 16S rRNA. In Neisseria meningitidis serogroup B (strain ATCC BAA-335 / MC58), this protein is Ribosomal RNA small subunit methyltransferase I.